The primary structure comprises 212 residues: MSATALGMIIFAYLCGSISSAILVCRIARLPDPRENGSGNPGATNVLRIGGRVAAAAVLVFDILKGMLPVWLAYKLDVPPLYLGLTAIAACLGHIYPVFFHFRGGKGVATAFGAIAPIGWDLTGLMTGTWLLTVLLSGYSSLGAIISALIAPFYVWWFKPQFTFPVAMLSCLILMRHHDNIQRLWRGQEGKIWGVFRKKKNDAAEQEEKKEE.

5 helical membrane passes run 5–25 (ALGM…ILVC), 53–73 (VAAA…VWLA), 80–100 (PLYL…PVFF), 112–132 (FGAI…TWLL), and 138–158 (GYSS…VWWF).

The protein belongs to the PlsY family. As to quaternary structure, probably interacts with PlsX.

It is found in the cell inner membrane. It carries out the reaction an acyl phosphate + sn-glycerol 3-phosphate = a 1-acyl-sn-glycero-3-phosphate + phosphate. Its pathway is lipid metabolism; phospholipid metabolism. Catalyzes the transfer of an acyl group from acyl-phosphate (acyl-PO(4)) to glycerol-3-phosphate (G3P) to form lysophosphatidic acid (LPA). This enzyme utilizes acyl-phosphate as fatty acyl donor, but not acyl-CoA or acyl-ACP. The polypeptide is Glycerol-3-phosphate acyltransferase (Serratia proteamaculans (strain 568)).